The sequence spans 307 residues: Myeloid-associated differentiation marker-like protein 2 (307 aa).

MARVEL domains follow at residues 17–154 (AVTS…ARPG) and 159–303 (YMAT…RIRF). A run of 7 helical transmembrane segments spans residues 53–73 (FCMAAWGFCFAFSVLVVACEF), 90–110 (AFAMLATLLCATAAVIYPLYF), 129–149 (LAASVFAGLLFLAYAAEVALT), 163–183 (VSGLLKIVQAFVACIIFGALV), 198–218 (VAVYSLCFMATVAVVVLSVMG), 232–252 (VVYTFLAVLLYLSAAVIWPVF), and 278–298 (LVVAIFTYVNLLLYIVDLAYS).

Belongs to the MAL family.

The protein localises to the membrane. In Rattus norvegicus (Rat), this protein is Myeloid-associated differentiation marker-like protein 2 (Myadml2).